The following is a 150-amino-acid chain: 1,4-dihydroxy-2-naphthoyl-CoA hydrolase (150 aa).

Residue Asp-19 is part of the active site.

Belongs to the 4-hydroxybenzoyl-CoA thioesterase family. DHNA-CoA hydrolase subfamily.

The catalysed reaction is 1,4-dihydroxy-2-naphthoyl-CoA + H2O = 1,4-dihydroxy-2-naphthoate + CoA + H(+). The protein operates within cofactor biosynthesis; phylloquinone biosynthesis. It functions in the pathway quinol/quinone metabolism; 1,4-dihydroxy-2-naphthoate biosynthesis; 1,4-dihydroxy-2-naphthoate from chorismate: step 7/7. Catalyzes the hydrolysis of 1,4-dihydroxy-2-naphthoyl-CoA (DHNA-CoA) to 1,4-dihydroxy-2-naphthoate (DHNA), a reaction involved in phylloquinone (vitamin K1) biosynthesis. The polypeptide is 1,4-dihydroxy-2-naphthoyl-CoA hydrolase (Prochlorococcus marinus (strain MIT 9215)).